Here is a 127-residue protein sequence, read N- to C-terminus: Glycine cleavage system H protein 1 (127 aa).

Residues 20-101 (LLTVGITAYA…LGEAWFFRFR (82 aa)) form the Lipoyl-binding domain. K60 bears the N6-lipoyllysine mark.

Belongs to the GcvH family. The glycine cleavage system is composed of four proteins: P, T, L and H. (R)-lipoate is required as a cofactor.

The glycine cleavage system catalyzes the degradation of glycine. The H protein shuttles the methylamine group of glycine from the P protein to the T protein. The protein is Glycine cleavage system H protein 1 of Pseudomonas aeruginosa (strain ATCC 15692 / DSM 22644 / CIP 104116 / JCM 14847 / LMG 12228 / 1C / PRS 101 / PAO1).